A 236-amino-acid polypeptide reads, in one-letter code: Putative N-acetylmannosamine-6-phosphate 2-epimerase (236 aa).

The protein belongs to the NanE family.

The catalysed reaction is an N-acyl-D-glucosamine 6-phosphate = an N-acyl-D-mannosamine 6-phosphate. It functions in the pathway amino-sugar metabolism; N-acetylneuraminate degradation; D-fructose 6-phosphate from N-acetylneuraminate: step 3/5. Converts N-acetylmannosamine-6-phosphate (ManNAc-6-P) to N-acetylglucosamine-6-phosphate (GlcNAc-6-P). The polypeptide is Putative N-acetylmannosamine-6-phosphate 2-epimerase (Listeria welshimeri serovar 6b (strain ATCC 35897 / DSM 20650 / CCUG 15529 / CIP 8149 / NCTC 11857 / SLCC 5334 / V8)).